Reading from the N-terminus, the 77-residue chain is Translation initiation factor IF-1, chloroplastic (77 aa).

Residues methionine 1–arginine 71 form the S1-like domain.

Belongs to the IF-1 family. As to quaternary structure, component of the 30S ribosomal translation pre-initiation complex which assembles on the 30S ribosome in the order IF-2 and IF-3, IF-1 and N-formylmethionyl-tRNA(fMet); mRNA recruitment can occur at any time during PIC assembly.

It localises to the plastid. The protein localises to the chloroplast. One of the essential components for the initiation of protein synthesis. Stabilizes the binding of IF-2 and IF-3 on the 30S subunit to which N-formylmethionyl-tRNA(fMet) subsequently binds. Helps modulate mRNA selection, yielding the 30S pre-initiation complex (PIC). Upon addition of the 50S ribosomal subunit IF-1, IF-2 and IF-3 are released leaving the mature 70S translation initiation complex. This is Translation initiation factor IF-1, chloroplastic from Lactuca sativa (Garden lettuce).